Consider the following 106-residue polypeptide: MAAAKIKRNDEVIVLSGKDKGKKGKVKCVFYNKGRVIVTGINLVKKHQKPIPNKNQPGGIIEKEASVDLSNIAIFNPTLNKADRIGFTIQNGKKIRIFKSNGDIVK.

It belongs to the universal ribosomal protein uL24 family. Part of the 50S ribosomal subunit.

One of two assembly initiator proteins, it binds directly to the 5'-end of the 23S rRNA, where it nucleates assembly of the 50S subunit. In terms of biological role, one of the proteins that surrounds the polypeptide exit tunnel on the outside of the subunit. The polypeptide is Large ribosomal subunit protein uL24 (Blochmanniella pennsylvanica (strain BPEN)).